We begin with the raw amino-acid sequence, 1070 residues long: DNA-directed RNA polymerase subunit beta (1070 aa).

It belongs to the RNA polymerase beta chain family. In terms of assembly, in plastids the minimal PEP RNA polymerase catalytic core is composed of four subunits: alpha, beta, beta', and beta''. When a (nuclear-encoded) sigma factor is associated with the core the holoenzyme is formed, which can initiate transcription.

It localises to the plastid. It is found in the chloroplast. The catalysed reaction is RNA(n) + a ribonucleoside 5'-triphosphate = RNA(n+1) + diphosphate. DNA-dependent RNA polymerase catalyzes the transcription of DNA into RNA using the four ribonucleoside triphosphates as substrates. This is DNA-directed RNA polymerase subunit beta from Buxus microphylla (Littleleaf boxwood).